A 159-amino-acid chain; its full sequence is Ribosome-binding factor A (159 aa).

The interval 127–159 is disordered; the sequence is TYAGEADPYRRPAVDDAGDSADDADPAEDERPS. Residues 142–159 show a composition bias toward acidic residues; that stretch reads DAGDSADDADPAEDERPS.

This sequence belongs to the RbfA family. Monomer. Binds 30S ribosomal subunits, but not 50S ribosomal subunits or 70S ribosomes.

The protein resides in the cytoplasm. Functionally, one of several proteins that assist in the late maturation steps of the functional core of the 30S ribosomal subunit. Associates with free 30S ribosomal subunits (but not with 30S subunits that are part of 70S ribosomes or polysomes). Required for efficient processing of 16S rRNA. May interact with the 5'-terminal helix region of 16S rRNA. The chain is Ribosome-binding factor A from Beutenbergia cavernae (strain ATCC BAA-8 / DSM 12333 / CCUG 43141 / JCM 11478 / NBRC 16432 / NCIMB 13614 / HKI 0122).